The primary structure comprises 345 residues: Fructose-bisphosphate aldolase (345 aa).

S53 lines the D-glyceraldehyde 3-phosphate pocket. The active-site Proton donor is the D95. Residues H96, D131, E161, and H212 each contribute to the Zn(2+) site. G213 lines the dihydroxyacetone phosphate pocket. Position 252 (H252) interacts with Zn(2+). Dihydroxyacetone phosphate contacts are provided by residues 253 to 255 (GGS) and 274 to 277 (NVDT).

Belongs to the class II fructose-bisphosphate aldolase family. The cofactor is Zn(2+).

It catalyses the reaction beta-D-fructose 1,6-bisphosphate = D-glyceraldehyde 3-phosphate + dihydroxyacetone phosphate. It participates in carbohydrate degradation; glycolysis; D-glyceraldehyde 3-phosphate and glycerone phosphate from D-glucose: step 4/4. Functionally, catalyzes the aldol condensation of dihydroxyacetone phosphate (DHAP or glycerone-phosphate) with glyceraldehyde 3-phosphate (G3P) to form fructose 1,6-bisphosphate (FBP) in gluconeogenesis and the reverse reaction in glycolysis. This chain is Fructose-bisphosphate aldolase (fba), found in Mycobacterium leprae (strain TN).